The primary structure comprises 916 residues: Protein translocase subunit SecA (916 aa).

ATP is bound by residues Gln87, 105-109 (GEGKT), and Asp512. The segment at 857–916 (QHAEAPSMEQAVAGEDEELPEGPAPVVPLEPVRNEQKIGRNEPCPCGSGKKYKHCHGQLD) is disordered. Residues Cys900, Cys902, Cys911, and His912 each contribute to the Zn(2+) site. Residues 906-916 (KKYKHCHGQLD) are compositionally biased toward basic residues.

Belongs to the SecA family. In terms of assembly, monomer and homodimer. Part of the essential Sec protein translocation apparatus which comprises SecA, SecYEG and auxiliary proteins SecDF-YajC and YidC. The cofactor is Zn(2+).

The protein resides in the cell inner membrane. Its subcellular location is the cytoplasm. The enzyme catalyses ATP + H2O + cellular proteinSide 1 = ADP + phosphate + cellular proteinSide 2.. Functionally, part of the Sec protein translocase complex. Interacts with the SecYEG preprotein conducting channel. Has a central role in coupling the hydrolysis of ATP to the transfer of proteins into and across the cell membrane, serving both as a receptor for the preprotein-SecB complex and as an ATP-driven molecular motor driving the stepwise translocation of polypeptide chains across the membrane. This chain is Protein translocase subunit SecA, found in Pseudomonas paraeruginosa (strain DSM 24068 / PA7) (Pseudomonas aeruginosa (strain PA7)).